The primary structure comprises 178 residues: Oligoribonuclease (178 aa).

Residues 7 to 168 form the Exonuclease domain; it reads LIWIDLEMTG…DDIRESIAEL (162 aa). Y128 is an active-site residue.

The protein belongs to the oligoribonuclease family.

Its subcellular location is the cytoplasm. 3'-to-5' exoribonuclease specific for small oligoribonucleotides. This Pseudomonas syringae pv. syringae (strain B728a) protein is Oligoribonuclease.